Reading from the N-terminus, the 178-residue chain is Large ribosomal subunit protein uL6 (178 aa).

This sequence belongs to the universal ribosomal protein uL6 family. In terms of assembly, part of the 50S ribosomal subunit.

Functionally, this protein binds to the 23S rRNA, and is important in its secondary structure. It is located near the subunit interface in the base of the L7/L12 stalk, and near the tRNA binding site of the peptidyltransferase center. In Campylobacter lari (strain RM2100 / D67 / ATCC BAA-1060), this protein is Large ribosomal subunit protein uL6.